The sequence spans 561 residues: DNA ligase B (561 aa).

Residue Lys-125 is the N6-AMP-lysine intermediate of the active site.

The protein belongs to the NAD-dependent DNA ligase family. LigB subfamily.

The enzyme catalyses NAD(+) + (deoxyribonucleotide)n-3'-hydroxyl + 5'-phospho-(deoxyribonucleotide)m = (deoxyribonucleotide)n+m + AMP + beta-nicotinamide D-nucleotide.. In terms of biological role, catalyzes the formation of phosphodiester linkages between 5'-phosphoryl and 3'-hydroxyl groups in double-stranded DNA using NAD as a coenzyme and as the energy source for the reaction. The protein is DNA ligase B of Salmonella dublin (strain CT_02021853).